Consider the following 691-residue polypeptide: Elongation factor G (691 aa).

The 275-residue stretch at 8–282 (ERVRNIGIAA…AVVDYLPAPI (275 aa)) folds into the tr-type G domain. GTP contacts are provided by residues 17–24 (AHIDAGKT), 81–85 (DTPGH), and 135–138 (NKMD).

The protein belongs to the TRAFAC class translation factor GTPase superfamily. Classic translation factor GTPase family. EF-G/EF-2 subfamily.

The protein resides in the cytoplasm. Its function is as follows. Catalyzes the GTP-dependent ribosomal translocation step during translation elongation. During this step, the ribosome changes from the pre-translocational (PRE) to the post-translocational (POST) state as the newly formed A-site-bound peptidyl-tRNA and P-site-bound deacylated tRNA move to the P and E sites, respectively. Catalyzes the coordinated movement of the two tRNA molecules, the mRNA and conformational changes in the ribosome. The polypeptide is Elongation factor G (Synechococcus sp. (strain CC9311)).